The following is a 231-amino-acid chain: Large ribosomal subunit protein uL1 (231 aa).

It belongs to the universal ribosomal protein uL1 family. As to quaternary structure, part of the 50S ribosomal subunit.

Binds directly to 23S rRNA. The L1 stalk is quite mobile in the ribosome, and is involved in E site tRNA release. In terms of biological role, protein L1 is also a translational repressor protein, it controls the translation of the L11 operon by binding to its mRNA. In Buchnera aphidicola subsp. Acyrthosiphon pisum (strain APS) (Acyrthosiphon pisum symbiotic bacterium), this protein is Large ribosomal subunit protein uL1.